A 405-amino-acid polypeptide reads, in one-letter code: Probable tRNA sulfurtransferase (405 aa).

In terms of domain architecture, THUMP spans 75–183 (PRAAGAAADV…QNLAYVYLET (109 aa)). ATP-binding positions include 201-202 (LM), Lys-285, Gly-307, and Gln-316.

The protein belongs to the ThiI family.

It localises to the cytoplasm. The catalysed reaction is [ThiI sulfur-carrier protein]-S-sulfanyl-L-cysteine + a uridine in tRNA + 2 reduced [2Fe-2S]-[ferredoxin] + ATP + H(+) = [ThiI sulfur-carrier protein]-L-cysteine + a 4-thiouridine in tRNA + 2 oxidized [2Fe-2S]-[ferredoxin] + AMP + diphosphate. The enzyme catalyses [ThiS sulfur-carrier protein]-C-terminal Gly-Gly-AMP + S-sulfanyl-L-cysteinyl-[cysteine desulfurase] + AH2 = [ThiS sulfur-carrier protein]-C-terminal-Gly-aminoethanethioate + L-cysteinyl-[cysteine desulfurase] + A + AMP + 2 H(+). The protein operates within cofactor biosynthesis; thiamine diphosphate biosynthesis. Functionally, catalyzes the ATP-dependent transfer of a sulfur to tRNA to produce 4-thiouridine in position 8 of tRNAs, which functions as a near-UV photosensor. Also catalyzes the transfer of sulfur to the sulfur carrier protein ThiS, forming ThiS-thiocarboxylate. This is a step in the synthesis of thiazole, in the thiamine biosynthesis pathway. The sulfur is donated as persulfide by IscS. This chain is Probable tRNA sulfurtransferase, found in Methanosarcina mazei (strain ATCC BAA-159 / DSM 3647 / Goe1 / Go1 / JCM 11833 / OCM 88) (Methanosarcina frisia).